The chain runs to 304 residues: Putative AraC-like transcription regulator (304 aa).

One can recognise an HTH araC/xylS-type domain in the interval A202 to H300. 2 DNA-binding regions (H-T-H motif) span residues A219–V240 and L267–L290.

The polypeptide is Putative AraC-like transcription regulator (Streptomyces lividans).